The following is a 1025-amino-acid chain: Multidrug resistance protein MdtC (1025 aa).

The next 12 helical transmembrane spans lie at 3-23, 333-353, 360-380, 387-407, 431-451, 463-483, 528-548, 853-873, 875-895, 897-917, 953-973, and 984-1004; these read FFALFIYRPVATILLSVAITL, EVEQTLIISVALVILVVFLFL, IIPAVAVPVSLIGTFAAMYLC, LSLMALTIATGFVVDDAIVVL, VGFTVLSMSLSLVAVFLPLLL, FAVTLSVAIGISLLVSLTLTP, LVGVVLLGTIALNIWLYISIP, VILIIAAIATVYIVLGILYES, VHPLTILSTLPSAGVGALLAL, LFNAPFSLIALIGIMLLIGIV, PIMMTTLAALFGALPLVLSGG, and ITIVGGLVMSQLLTLYTTPVV.

This sequence belongs to the resistance-nodulation-cell division (RND) (TC 2.A.6) family. MdtC subfamily. Part of a tripartite efflux system composed of MdtA, MdtB and MdtC. MdtC forms a heteromultimer with MdtB.

The protein localises to the cell inner membrane. The MdtABC tripartite complex confers resistance against novobiocin and deoxycholate. The sequence is that of Multidrug resistance protein MdtC from Escherichia coli (strain SMS-3-5 / SECEC).